A 389-amino-acid polypeptide reads, in one-letter code: Chalcone synthase 2 (389 aa).

Cys-164 is a catalytic residue.

This sequence belongs to the thiolase-like superfamily. Chalcone/stilbene synthases family.

The enzyme catalyses (E)-4-coumaroyl-CoA + 3 malonyl-CoA + 3 H(+) = 2',4,4',6'-tetrahydroxychalcone + 3 CO2 + 4 CoA. Its pathway is secondary metabolite biosynthesis; flavonoid biosynthesis. Its function is as follows. The primary product of this enzyme is 4,2',4',6'-tetrahydroxychalcone (also termed naringenin-chalcone or chalcone) which can under specific conditions spontaneously isomerize into naringenin. In Solanum lycopersicum (Tomato), this protein is Chalcone synthase 2 (CHS2).